The chain runs to 389 residues: Pregnancy-associated glycoprotein 1 (389 aa).

A signal peptide spans 1 to 15 (MKWLVILGLVALSEC). In terms of domain architecture, Peptidase A1 spans 76-386 (YVGNITIGTP…DRGQNRIGLR (311 aa)). An N-linked (GlcNAc...) asparagine glycan is attached at asparagine 79. Aspartate 94 is a catalytic residue. Cysteine 107 and cysteine 112 form a disulfide bridge. Asparagine 130 is a glycosylation site (N-linked (GlcNAc...) asparagine). The cysteines at positions 268 and 272 are disulfide-linked. Aspartate 277 is a catalytic residue. An intrachain disulfide couples cysteine 311 to cysteine 345. Asparagine 348 is a glycosylation site (N-linked (GlcNAc...) asparagine).

This sequence belongs to the peptidase A1 family. As to expression, expressed throughout the chorion, with the signal localized exclusively over the trophectoderm.

The protein localises to the secreted. It is found in the extracellular space. Its function is as follows. Appears to be proteolytically inactive. This chain is Pregnancy-associated glycoprotein 1, found in Sus scrofa (Pig).